A 426-amino-acid polypeptide reads, in one-letter code: MIAELVFVGTELLLGEILNTNAQYLSRQLAQLGVDVYHQVVVGDNAARLRAVLSQALSRSDLVIASGGLGPTDDDITREVAAEVTGRPLELDPQLLAQLEIWFARRGRRMAENNRRQCMVPRGARVLPNDRGTAPGLMIPADGDKVVILLPGPPGELRPMFEAHVAPYLAARSGGRPLRLVTRTLRFVGIGESALADGLRDLMATQTDPTIAPYAKVAEVHLRLATRAADEAEGYARIAPLEAEIRSRFGRFLYGSDEETLPQAVGRLLAERGMTLSTAESCTGGLVAKWITDVPGSSRYFGTGFVTYANEAKVSLLGVPEELLSAHGAVSEPVARAMAEGALQRSGADVAVAVSGIAGPDGGTPEKPVGTVCFALAGRGRQGGGPLPAGTWAETLWLHGDRDGVRERAAVHALAMVRRYLLGYLD.

This sequence belongs to the CinA family.

The polypeptide is Putative competence-damage inducible protein (Symbiobacterium thermophilum (strain DSM 24528 / JCM 14929 / IAM 14863 / T)).